Reading from the N-terminus, the 694-residue chain is TBC1 domain family member 14 (694 aa).

Phosphoserine is present on S92. Positions 272-289 are enriched in basic and acidic residues; sequence TAQKDSKKTQKEYEDKAG. Residues 272–305 form a disordered region; the sequence is TAQKDSKKTQKEYEDKAGRPSRPPSPKQNVRKNL. The residue at position 296 (S296) is a Phosphoserine. The region spanning 402–612 is the Rab-GAP TBC domain; sequence GIPPSVRGKV…RIWDVFCRDG (211 aa).

In terms of assembly, interacts with ULK1. May interact with RAB11A and RAB11B, but does not exhibit any GTPase-activating activity toward these proteins. Interacts with TRAPPC8.

The protein resides in the golgi apparatus. Its subcellular location is the cis-Golgi network. It is found in the trans-Golgi network. Plays a role in the regulation of starvation-induced autophagosome formation. Together with the TRAPPIII complex, regulates a constitutive trafficking step from peripheral recycling endosomes to the early Golgi, maintaining the cycling pool of ATG9 required for initiation of autophagy. The polypeptide is TBC1 domain family member 14 (Tbc1d14) (Mus musculus (Mouse)).